The following is a 575-amino-acid chain: Alpha-(1,6)-fucosyltransferase (575 aa).

Over 1-9 (MRPWTGSWR) the chain is Cytoplasmic. The chain crosses the membrane as a helical; Signal-anchor for type II membrane protein span at residues 10–30 (WIMLILFAWGTLLFYIGGHLV). At 31-575 (RDNDHPDHSS…KYPTYPEAEK (545 aa)) the chain is on the lumenal side. 3 disulfide bridges follow: C204–C266, C212–C230, and C218–C222. The GT23 domain maps to 206-493 (KAKKLVCNIN…PDASANFHSL (288 aa)). S278 carries the phosphoserine modification. The SH3-binding motif lies at 299–305 (PRPPYLP). Residues 365 to 366 (RR) are important for donor substrate binding. A disulfide bridge connects residues C465 and C472. Residues 502–563 (QNAHNQIAIY…PSYKVREKIE (62 aa)) form the SH3 domain.

It belongs to the glycosyltransferase 23 family. Tyrosine phosphorylated by PKDCC/VLK.

The protein resides in the golgi apparatus. It localises to the golgi stack membrane. It catalyses the reaction N(4)-{beta-D-GlcNAc-(1-&gt;2)-alpha-D-Man-(1-&gt;3)-[beta-D-GlcNAc-(1-&gt;2)-alpha-D-Man-(1-&gt;6)]-beta-D-Man-(1-&gt;4)-beta-D-GlcNAc-(1-&gt;4)-beta-D-GlcNAc}-L-asparaginyl-[protein] + GDP-beta-L-fucose = an N(4)-{beta-D-GlcNAc-(1-&gt;2)-alpha-D-Man-(1-&gt;3)-[beta-D-GlcNAc-(1-&gt;2)-alpha-D-Man-(1-&gt;6)]-beta-D-Man-(1-&gt;4)-beta-D-GlcNAc-(1-&gt;4)-[alpha-L-Fuc-(1-&gt;6)]-beta-D-GlcNAc}-L-asparaginyl-[protein] + GDP + H(+). It participates in protein modification; protein glycosylation. In terms of biological role, catalyzes the addition of fucose in alpha 1-6 linkage to the first GlcNAc residue, next to the peptide chains in N-glycans. The sequence is that of Alpha-(1,6)-fucosyltransferase (FUT8) from Homo sapiens (Human).